Here is a 985-residue protein sequence, read N- to C-terminus: Tudor domain-containing protein 5 (985 aa).

The region spanning 7-80 (VQECLRKEIR…DGTIILRAIP (74 aa)) is the HTH OST-type 1 domain. Positions 98-119 (HKVRNSMQKGRPSVCSGSSSRR) are disordered. The span at 107-116 (GRPSVCSGSS) shows a compositional bias: low complexity. 2 consecutive HTH OST-type domains span residues 127–202 (VPPI…LKRS) and 300–374 (INPE…FDAN). One can recognise a Tudor domain in the interval 530–589 (FIQPGHLCCVRISEDKWWYRVIIHRVLGKQEVEVFYPDFGNIGTVQKSSLRFLKWCYTKL). Disordered regions lie at residues 818-846 (EELSAQEKNIGTTRSQKQPNLESSSDSPT) and 889-915 (STTPAAVDSPEKHSGSVESSPESLKND). Polar residues predominate over residues 823-845 (QEKNIGTTRSQKQPNLESSSDSP). Position 897 is a phosphoserine (Ser897). The segment covering 904-915 (SVESSPESLKND) has biased composition (polar residues).

The protein belongs to the TDRD5 family.

Its subcellular location is the cytoplasm. In terms of biological role, required during spermiogenesis to participate in the repression transposable elements and prevent their mobilization, which is essential for the germline integrity. Probably acts via the piRNA metabolic process, which mediates the repression of transposable elements during meiosis by forming complexes composed of piRNAs and Piwi proteins and govern the methylation and subsequent repression of transposons. Required for chromatoid body (CB) assembly. The polypeptide is Tudor domain-containing protein 5 (TDRD5) (Canis lupus familiaris (Dog)).